Consider the following 389-residue polypeptide: Na(+)/H(+) antiporter NhaA (389 aa).

The next 11 helical transmembrane spans lie at 17–37 (ILLL…LAGF), 59–79 (LLLW…GLEV), 95–115 (SLPT…YLLF), 124–144 (AGWA…MALL), 154–174 (VFLL…IALF), 177–197 (SDLS…LVAL), 213–233 (LILW…GVII), 261–281 (FLIL…NMSL), 292–312 (IALG…FVAV), 328–348 (IAPV…IASL), and 363–383 (LGTL…LSKV).

Belongs to the NhaA Na(+)/H(+) (TC 2.A.33) antiporter family.

The protein resides in the cell inner membrane. It catalyses the reaction Na(+)(in) + 2 H(+)(out) = Na(+)(out) + 2 H(+)(in). In terms of biological role, na(+)/H(+) antiporter that extrudes sodium in exchange for external protons. This chain is Na(+)/H(+) antiporter NhaA, found in Shewanella oneidensis (strain ATCC 700550 / JCM 31522 / CIP 106686 / LMG 19005 / NCIMB 14063 / MR-1).